Reading from the N-terminus, the 824-residue chain is Acyl-homoserine lactone acylase QuiP (824 aa).

The N-terminal stretch at 1–26 (MASPALRHFLPRFGAAAAAASFLSLA) is a signal peptide. Catalysis depends on serine 264, which acts as the Nucleophile.

This sequence belongs to the peptidase S45 family. In terms of assembly, heterodimer of an alpha subunit and a beta subunit processed from the same precursor.

Its subcellular location is the periplasm. It carries out the reaction an N-acyl-L-homoserine lactone + H2O = L-homoserine lactone + a carboxylate. Catalyzes the deacylation of acyl-homoserine lactone (AHL or acyl-HSL), releasing homoserine lactone (HSL) and the corresponding fatty acid. Possesses a specificity for the degradation of long-chain acyl-HSLs (side chains of seven or more carbons in length). The sequence is that of Acyl-homoserine lactone acylase QuiP (quiP) from Pseudomonas syringae pv. tomato (strain ATCC BAA-871 / DC3000).